A 385-amino-acid polypeptide reads, in one-letter code: 1-deoxy-D-xylulose 5-phosphate reductoisomerase (385 aa).

NADPH contacts are provided by Ser10, Gly11, Ser12, Ile13, Gly36, Asn38, and Asn124. Lys125 lines the 1-deoxy-D-xylulose 5-phosphate pocket. An NADPH-binding site is contributed by Glu126. Asp150 provides a ligand contact to Mn(2+). The 1-deoxy-D-xylulose 5-phosphate site is built by Ser151, Glu152, Ser176, and His198. Glu152 lines the Mn(2+) pocket. Position 204 (Gly204) interacts with NADPH. Ser211, Asn216, Lys217, and Glu220 together coordinate 1-deoxy-D-xylulose 5-phosphate. Glu220 is a Mn(2+) binding site.

This sequence belongs to the DXR family. Mg(2+) serves as cofactor. Requires Mn(2+) as cofactor.

It catalyses the reaction 2-C-methyl-D-erythritol 4-phosphate + NADP(+) = 1-deoxy-D-xylulose 5-phosphate + NADPH + H(+). The protein operates within isoprenoid biosynthesis; isopentenyl diphosphate biosynthesis via DXP pathway; isopentenyl diphosphate from 1-deoxy-D-xylulose 5-phosphate: step 1/6. In terms of biological role, catalyzes the NADPH-dependent rearrangement and reduction of 1-deoxy-D-xylulose-5-phosphate (DXP) to 2-C-methyl-D-erythritol 4-phosphate (MEP). In Endomicrobium trichonymphae, this protein is 1-deoxy-D-xylulose 5-phosphate reductoisomerase.